The primary structure comprises 501 residues: Isoflavone 3'-hydroxylase (501 aa).

Residues 7–24 form a helical membrane-spanning segment; that stretch reads LLSLSFIITIKILLKITS. C439 provides a ligand contact to heme.

Belongs to the cytochrome P450 family. The cofactor is heme. Expressed constitutively in leaves and stems, but not in roots.

It localises to the endoplasmic reticulum membrane. It catalyses the reaction formononetin + reduced [NADPH--hemoprotein reductase] + O2 = calycosin + oxidized [NADPH--hemoprotein reductase] + H2O + H(+). Its function is as follows. Involved in the biosynthesis of the pterocarpin phytoalexins. Acts on isoflavones with a 4'-methoxy group on the B-ring, such as biochanin A, formononetin and 2'-hydroxyformononetin. Has a low activity with daidzein and pseudobaptigenin, and no activity with the 7-O-methylated isoflavonoids isoformononetin and prunetin. The chain is Isoflavone 3'-hydroxylase from Medicago truncatula (Barrel medic).